A 157-amino-acid polypeptide reads, in one-letter code: Small ribosomal subunit protein uS7 (157 aa).

The protein belongs to the universal ribosomal protein uS7 family. In terms of assembly, part of the 30S ribosomal subunit. Contacts proteins S9 and S11.

In terms of biological role, one of the primary rRNA binding proteins, it binds directly to 16S rRNA where it nucleates assembly of the head domain of the 30S subunit. Is located at the subunit interface close to the decoding center, probably blocks exit of the E-site tRNA. In Protochlamydia amoebophila (strain UWE25), this protein is Small ribosomal subunit protein uS7.